Consider the following 247-residue polypeptide: MADS-box transcription factor 1 (247 aa).

Residues 1–61 (MGRGRVELKR…GKLYEFCSTS (61 aa)) enclose the MADS-box domain. A K-box domain is found at 91-181 (ELSSQQEYLK…RQRMEGYQIN (91 aa)).

As to expression, expressed abundantly in the seed coat and to lesser extent in young buds, carpels, petals, and stamen.

The protein localises to the nucleus. Its function is as follows. Probable transcription factor. The polypeptide is MADS-box transcription factor 1 (Pisum sativum (Garden pea)).